We begin with the raw amino-acid sequence, 472 residues long: Sarcalumenin (472 aa).

The signal sequence occupies residues 1 to 19 (MRALLLFCFVASLLLSGQA). Residues 89-330 (ITSKPMVLFL…IENRLENKIA (242 aa)) form the Dynamin-type G domain. The segment at 99–106 (GPWSVGKS) is G1 motif. Residue Ser-102 is glycosylated (N-linked (GlcNAc...) asparagine). The tract at residues 127 to 128 (EP) is G2 motif. The tract at residues 189–192 (DTPG) is G3 motif. The tract at residues 254–257 (NKAD) is G4 motif. A region of interest (G5 motif) is located at residue Pro-277. Asn-280 and Asn-388 each carry an N-linked (GlcNAc...) asparagine glycan.

Belongs to the TRAFAC class dynamin-like GTPase superfamily. Dynamin/Fzo/YdjA family. Post-translationally, N-glycosylated. As to expression, detected in skeletal muscle.

Its subcellular location is the sarcoplasmic reticulum lumen. The protein resides in the sarcoplasmic reticulum membrane. In Oryctolagus cuniculus (Rabbit), this protein is Sarcalumenin (SRL).